The following is a 192-amino-acid chain: Transcription termination/antitermination protein NusG (192 aa).

In terms of domain architecture, KOW spans Val-140 to Leu-168.

This sequence belongs to the NusG family.

Participates in transcription elongation, termination and antitermination. The polypeptide is Transcription termination/antitermination protein NusG (Rickettsia felis (strain ATCC VR-1525 / URRWXCal2) (Rickettsia azadi)).